The following is a 284-amino-acid chain: F-box only protein 6 (284 aa).

An F-box domain is found at 1–48 (MVNINELPENILLELFTHVPAPQLLRNCRLVCSLWRDLIDVMTLWKRK). Positions 69–250 (FYILCSLQRN…VTNSSIIVSH (182 aa)) constitute an FBA domain. Residues Ser-249, Ser-268, Ser-275, Ser-278, and Ser-283 each carry the phosphoserine modification.

Part of a SCF (SKP1-cullin-F-box) protein ligase complex. Interacts with VCP, CHEK1 and CUL1.

Its subcellular location is the cytoplasm. Its pathway is protein modification; protein ubiquitination. In terms of biological role, substrate-recognition component of some SCF (SKP1-CUL1-F-box protein)-type E3 ubiquitin ligase complexes. Involved in endoplasmic reticulum-associated degradation pathway (ERAD) for misfolded lumenal proteins by recognizing and binding sugar chains on unfolded glycoproteins that are retrotranslocated into the cytosol and promoting their ubiquitination and subsequent degradation. Able to recognize and bind denatured glycoproteins, which are modified with not only high-mannose but also complex-type oligosaccharides. Also recognizes sulfated glycans. Also involved in DNA damage response by specifically recognizing activated CHEK1 (phosphorylated on 'Ser-345'), promoting its ubiquitination and degradation. Ubiquitination of CHEK1 is required to ensure that activated CHEK1 does not accumulate as cells progress through S phase, or when replication forks encounter transient impediments during normal DNA replication. The protein is F-box only protein 6 (Fbxo6) of Rattus norvegicus (Rat).